The primary structure comprises 118 residues: Large ribosomal subunit protein uL18 (118 aa).

The protein belongs to the universal ribosomal protein uL18 family. Part of the 50S ribosomal subunit; part of the 5S rRNA/L5/L18/L25 subcomplex. Contacts the 5S and 23S rRNAs.

This is one of the proteins that bind and probably mediate the attachment of the 5S RNA into the large ribosomal subunit, where it forms part of the central protuberance. The chain is Large ribosomal subunit protein uL18 from Rhizorhabdus wittichii (strain DSM 6014 / CCUG 31198 / JCM 15750 / NBRC 105917 / EY 4224 / RW1) (Sphingomonas wittichii).